The following is a 341-amino-acid chain: UDP-glucose 4-epimerase (341 aa).

This sequence belongs to the polysaccharide synthase family.

It carries out the reaction UDP-alpha-D-glucose = UDP-alpha-D-galactose. Functionally, epimerizes UDP-galactose to UDP-glucose. This Rickettsia canadensis (strain McKiel) protein is UDP-glucose 4-epimerase (capD).